Reading from the N-terminus, the 227-residue chain is MKAVLLLSGGMDSLVTTAIAHREGYELAAMHVNYGQRTWQKELQSFRSIADHYSITERLEVNADFLGRIGGSSLTDHSMPVAGADLRGSGIPTSYVPFRNACFLSMAVSWSEVIGAERLFIGAVEEDSSGYPDCRRVFYDAFNRVIELGTRPETGITILTPLIAMQKAQIVRNGMELGAPFEHSWSCYRSEGRACGVCDSCARRLRAFELQGIRDPIDYEVRPQYID.

An ATP-binding site is contributed by 7-17; the sequence is LSGGMDSLVTT. Residues Cys187, Cys195, Cys198, and Cys201 each coordinate Zn(2+).

It belongs to the QueC family. The cofactor is Zn(2+).

The catalysed reaction is 7-carboxy-7-deazaguanine + NH4(+) + ATP = 7-cyano-7-deazaguanine + ADP + phosphate + H2O + H(+). It participates in purine metabolism; 7-cyano-7-deazaguanine biosynthesis. Functionally, catalyzes the ATP-dependent conversion of 7-carboxy-7-deazaguanine (CDG) to 7-cyano-7-deazaguanine (preQ(0)). In Chlorobium luteolum (strain DSM 273 / BCRC 81028 / 2530) (Pelodictyon luteolum), this protein is 7-cyano-7-deazaguanine synthase.